A 1219-amino-acid polypeptide reads, in one-letter code: Regulator of telomere elongation helicase 1 (1219 aa).

The Helicase ATP-binding domain maps to 7-296 (NGVTVDFPFQ…TKAAQQGEPH (290 aa)). ATP is bound at residue 42–49 (SPTGTGKT). The [4Fe-4S] cluster site is built by C145, C163, C172, and C207. The Nuclear localization signal motif lies at 151-167 (KKQESNHLQIHLCRKKV). Positions 250 to 253 (DEAH) match the DEAH box motif. 7 disordered regions span residues 287–306 (TKAA…SPSP), 757–786 (PAPA…FFST), 839–877 (EHSE…GRKK), 979–1005 (RPEH…PDPK), 1017–1054 (DPQE…RAGK), 1132–1151 (CTDL…PQEE), and 1159–1219 (LTHR…EWGL). Over residues 757-766 (PAPAPRATAP) the composition is skewed to low complexity. The segment covering 863 to 873 (SEKRPAEEPRG) has biased composition (basic and acidic residues). The Nuclear localization signal motif lies at 871-877 (PRGGRKK). Over residues 1176–1185 (KTQSKISSFL) the composition is skewed to polar residues. The PIP-box motif lies at 1178 to 1185 (QSKISSFL). The segment covering 1200 to 1219 (AGPSQSSGPPHGPAASEWGL) has biased composition (low complexity).

This sequence belongs to the helicase family. RAD3/XPD subfamily. In terms of assembly, interacts with TERF1. Interacts (via PIP-box) with PCNA; the interaction is direct and essential for suppressing telomere fragility. Interacts with MMS19; the interaction mediates the association of RTEL1 with the cytosolic iron-sulfur protein assembly (CIA) complex.

Its subcellular location is the nucleus. The catalysed reaction is ATP + H2O = ADP + phosphate + H(+). A probable ATP-dependent DNA helicase implicated in telomere-length regulation, DNA repair and the maintenance of genomic stability. Acts as an anti-recombinase to counteract toxic recombination and limit crossover during meiosis. Regulates meiotic recombination and crossover homeostasis by physically dissociating strand invasion events and thereby promotes noncrossover repair by meiotic synthesis dependent strand annealing (SDSA) as well as disassembly of D loop recombination intermediates. Also disassembles T loops and prevents telomere fragility by counteracting telomeric G4-DNA structures, which together ensure the dynamics and stability of the telomere. This chain is Regulator of telomere elongation helicase 1, found in Homo sapiens (Human).